A 558-amino-acid polypeptide reads, in one-letter code: Arginine--tRNA ligase (558 aa).

The short motif at 129 to 139 is the 'HIGH' region element; the sequence is ANPTGPLHVGH.

It belongs to the class-I aminoacyl-tRNA synthetase family. As to quaternary structure, monomer.

The protein localises to the cytoplasm. It catalyses the reaction tRNA(Arg) + L-arginine + ATP = L-arginyl-tRNA(Arg) + AMP + diphosphate. In Polaromonas naphthalenivorans (strain CJ2), this protein is Arginine--tRNA ligase.